A 391-amino-acid polypeptide reads, in one-letter code: Probable tRNA sulfurtransferase (391 aa).

The region spanning 60-167 (DETVAALQRV…NKAYVYSNTL (108 aa)) is the THUMP domain. ATP is bound by residues 184-185 (LL), 209-210 (YF), R266, G288, and Q297.

The protein belongs to the ThiI family.

It is found in the cytoplasm. It carries out the reaction [ThiI sulfur-carrier protein]-S-sulfanyl-L-cysteine + a uridine in tRNA + 2 reduced [2Fe-2S]-[ferredoxin] + ATP + H(+) = [ThiI sulfur-carrier protein]-L-cysteine + a 4-thiouridine in tRNA + 2 oxidized [2Fe-2S]-[ferredoxin] + AMP + diphosphate. The enzyme catalyses [ThiS sulfur-carrier protein]-C-terminal Gly-Gly-AMP + S-sulfanyl-L-cysteinyl-[cysteine desulfurase] + AH2 = [ThiS sulfur-carrier protein]-C-terminal-Gly-aminoethanethioate + L-cysteinyl-[cysteine desulfurase] + A + AMP + 2 H(+). The protein operates within cofactor biosynthesis; thiamine diphosphate biosynthesis. Functionally, catalyzes the ATP-dependent transfer of a sulfur to tRNA to produce 4-thiouridine in position 8 of tRNAs, which functions as a near-UV photosensor. Also catalyzes the transfer of sulfur to the sulfur carrier protein ThiS, forming ThiS-thiocarboxylate. This is a step in the synthesis of thiazole, in the thiamine biosynthesis pathway. The sulfur is donated as persulfide by IscS. This Lachnoclostridium phytofermentans (strain ATCC 700394 / DSM 18823 / ISDg) (Clostridium phytofermentans) protein is Probable tRNA sulfurtransferase.